The chain runs to 318 residues: UDP-N-acetylenolpyruvoylglucosamine reductase (318 aa).

In terms of domain architecture, FAD-binding PCMH-type spans 38 to 204; the sequence is IGGVCPVIVE…LGIEILLKEG (167 aa). Arginine 182 is a catalytic residue. Residues 212–229 are compositionally biased toward basic and acidic residues; it reads SLKDKRDRRNSSQPENKK. Residues 212-232 are disordered; it reads SLKDKRDRRNSSQPENKKSAG. Serine 233 functions as the Proton donor in the catalytic mechanism. Glutamate 310 is an active-site residue.

The protein belongs to the MurB family. FAD is required as a cofactor.

It localises to the cytoplasm. The catalysed reaction is UDP-N-acetyl-alpha-D-muramate + NADP(+) = UDP-N-acetyl-3-O-(1-carboxyvinyl)-alpha-D-glucosamine + NADPH + H(+). It functions in the pathway cell wall biogenesis; peptidoglycan biosynthesis. In terms of biological role, cell wall formation. The chain is UDP-N-acetylenolpyruvoylglucosamine reductase from Leptospira interrogans serogroup Icterohaemorrhagiae serovar Lai (strain 56601).